Here is an 867-residue protein sequence, read N- to C-terminus: Bifunctional diterpene synthase, chloroplastic (867 aa).

A chloroplast-targeting transit peptide spans Met1–Cys55. Residue Lys255 coordinates substrate. 2 residues coordinate Mg(2+): Asp389 and Asp391. The DXDD motif motif lies at Asp389–Asp392. Residue Lys474 participates in substrate binding. 5 residues coordinate Mg(2+): Asp611, Asp615, Asn758, Thr762, and Glu766. Residues Asp611–Asp615 carry the DDXXD motif motif.

Belongs to the terpene synthase family. The cofactor is Mg(2+).

The protein resides in the plastid. The protein localises to the chloroplast. The enzyme catalyses (+)-copalyl diphosphate = miltiradiene + diphosphate. It carries out the reaction (2E,6E,10E)-geranylgeranyl diphosphate = (+)-copalyl diphosphate. It functions in the pathway secondary metabolite biosynthesis; terpenoid biosynthesis. Functionally, bifunctional diterpene cyclase that catalyzes the successive two-step type-B (protonation-initiated cyclization) and type-A (ionization-initiated cyclization) reactions of geranylgeranyl diphosphate (GGDP) producing successively (+)-copalyl diphosphate and miltiradiene. The chain is Bifunctional diterpene synthase, chloroplastic (MDS) from Selaginella moellendorffii (Spikemoss).